Consider the following 719-residue polypeptide: Penicillin-binding protein 1A (719 aa).

The interval 62 to 223 (LIADLGSERR…NQYDPYSHPE (162 aa)) is transglycosylase. The active-site Proton donor; for transglycosylase activity is Glu91. The tract at residues 297 to 611 (DVYTNVDQEA…RLTPLVGNGL (315 aa)) is transpeptidase. Ser370 acts as the Acyl-ester intermediate; for transpeptidase activity in catalysis. The tract at residues 652 to 719 (ARSTWSSPAP…QNQNPQPAQP (68 aa)) is disordered. The span at 654 to 719 (STWSSPAPQQ…QNQNPQPAQP (66 aa)) shows a compositional bias: low complexity.

It in the N-terminal section; belongs to the glycosyltransferase 51 family. This sequence in the C-terminal section; belongs to the transpeptidase family. As to quaternary structure, interacts with MreC in the elongasome.

Its subcellular location is the secreted. The enzyme catalyses [GlcNAc-(1-&gt;4)-Mur2Ac(oyl-L-Ala-gamma-D-Glu-L-Lys-D-Ala-D-Ala)](n)-di-trans,octa-cis-undecaprenyl diphosphate + beta-D-GlcNAc-(1-&gt;4)-Mur2Ac(oyl-L-Ala-gamma-D-Glu-L-Lys-D-Ala-D-Ala)-di-trans,octa-cis-undecaprenyl diphosphate = [GlcNAc-(1-&gt;4)-Mur2Ac(oyl-L-Ala-gamma-D-Glu-L-Lys-D-Ala-D-Ala)](n+1)-di-trans,octa-cis-undecaprenyl diphosphate + di-trans,octa-cis-undecaprenyl diphosphate + H(+). The catalysed reaction is Preferential cleavage: (Ac)2-L-Lys-D-Ala-|-D-Ala. Also transpeptidation of peptidyl-alanyl moieties that are N-acyl substituents of D-alanine.. Its pathway is cell wall biogenesis; peptidoglycan biosynthesis. Its function is as follows. Cell wall formation. The protein is Penicillin-binding protein 1A (pbpA) of Streptococcus pneumoniae (strain ATCC BAA-255 / R6).